We begin with the raw amino-acid sequence, 699 residues long: Bifunctional protein GAL10 (699 aa).

Residues 1-357 (MTAQLQSEST…TTENPFGYQL (357 aa)) are galactowaldenase. NAD(+) is bound at residue 13–44 (IVLVTGGAGYIGSHTVVELIENGYDCVVADNL). A mutarotase region spans residues 358–699 (RGVEARFSAE…YGSKIVYRFS (342 aa)). The active-site For mutarotase activity is His-537. Ser-562 bears the Phosphoserine mark.

In the N-terminal section; belongs to the NAD(P)-dependent epimerase/dehydratase family. This sequence in the C-terminal section; belongs to the aldose epimerase family. Requires NAD(+) as cofactor.

It catalyses the reaction UDP-alpha-D-glucose = UDP-alpha-D-galactose. The catalysed reaction is alpha-D-glucose = beta-D-glucose. It participates in carbohydrate metabolism; galactose metabolism. It functions in the pathway carbohydrate metabolism; hexose metabolism. In terms of biological role, mutarotase converts alpha-aldose to the beta-anomer. It is active on D-glucose, L-arabinose, D-xylose, D-galactose, maltose and lactose. The polypeptide is Bifunctional protein GAL10 (GAL10) (Saccharomyces cerevisiae (strain ATCC 204508 / S288c) (Baker's yeast)).